Consider the following 240-residue polypeptide: Octanoyltransferase (240 aa).

The BPL/LPL catalytic domain occupies 31–216; the sequence is GQVGDTLLLL…HLCAVFDLEP (186 aa). Substrate-binding positions include 76–83, 145–147, and 159–161; these read RGGGATYH, AIG, and GLA. C177 acts as the Acyl-thioester intermediate in catalysis.

Belongs to the LipB family.

It localises to the cytoplasm. The enzyme catalyses octanoyl-[ACP] + L-lysyl-[protein] = N(6)-octanoyl-L-lysyl-[protein] + holo-[ACP] + H(+). It functions in the pathway protein modification; protein lipoylation via endogenous pathway; protein N(6)-(lipoyl)lysine from octanoyl-[acyl-carrier-protein]: step 1/2. Catalyzes the transfer of endogenously produced octanoic acid from octanoyl-acyl-carrier-protein onto the lipoyl domains of lipoate-dependent enzymes. Lipoyl-ACP can also act as a substrate although octanoyl-ACP is likely to be the physiological substrate. This is Octanoyltransferase from Roseiflexus sp. (strain RS-1).